Consider the following 230-residue polypeptide: Thioredoxin domain-containing protein PLP3A (230 aa).

Positions 89–173 (VSEGDFLGEV…GVAMDRLVGF (85 aa)) constitute a Thioredoxin domain. The segment at 197-230 (LSKKKKEEDDEDAEYQESIRRSVRSSENLDSDSD) is disordered.

Belongs to the phosducin family. Interacts with TUBB2, TUBB3, TUBB4 and TUBB5. In terms of tissue distribution, expressed in embryos, shoot meristems, leaf primordia, root meristems, floral meristems and young floral buds.

The protein resides in the cytoplasm. It is found in the nucleus. Functionally, tubulin-binding protein involved in microtubule formation. This chain is Thioredoxin domain-containing protein PLP3A (PLP3A), found in Arabidopsis thaliana (Mouse-ear cress).